We begin with the raw amino-acid sequence, 111 residues long: Probable 4-amino-4-deoxy-L-arabinose-phosphoundecaprenol flippase subunit ArnE (111 aa).

At Met-1–Ala-37 the chain is on the cytoplasmic side. The chain crosses the membrane as a helical span at residues Leu-38–Leu-58. The region spanning Leu-40–Ser-109 is the EamA domain. The Periplasmic portion of the chain corresponds to Gln-59–Thr-60. A helical transmembrane segment spans residues Val-61–Ala-81. Residues Thr-82–Glu-87 are Cytoplasmic-facing. Residues Pro-88–Gly-108 traverse the membrane as a helical segment. Topologically, residues Ser-109–Val-111 are periplasmic.

Belongs to the ArnE family. Heterodimer of ArnE and ArnF.

It is found in the cell inner membrane. Its pathway is bacterial outer membrane biogenesis; lipopolysaccharide biosynthesis. Functionally, translocates 4-amino-4-deoxy-L-arabinose-phosphoundecaprenol (alpha-L-Ara4N-phosphoundecaprenol) from the cytoplasmic to the periplasmic side of the inner membrane. The chain is Probable 4-amino-4-deoxy-L-arabinose-phosphoundecaprenol flippase subunit ArnE from Escherichia fergusonii (strain ATCC 35469 / DSM 13698 / CCUG 18766 / IAM 14443 / JCM 21226 / LMG 7866 / NBRC 102419 / NCTC 12128 / CDC 0568-73).